The chain runs to 481 residues: Tryptophan--tRNA ligase, cytoplasmic (481 aa).

One can recognise a WHEP-TRS domain in the interval 12–68; the sequence is SPLELFNSIAAQGELVRSLKAGNAPKDEIESAVKMLLSLKMNYKTAMGEEYKAGCPP. Residues 65–85 are disordered; sequence GCPPGNSTAGSNGDPDATKAS. An N6-succinyllysine modification is found at Lys-158. The 'HIGH' region signature appears at 168 to 177; sequence PSSEAMHLGH. Positions 353–357 match the 'KMSKS' region motif; it reads KMSAS. The residue at position 355 (Ser-355) is a Phosphoserine.

The protein belongs to the class-I aminoacyl-tRNA synthetase family. In terms of assembly, homodimer. Interacts with oxidized form of GAPDH. In terms of processing, proteolytic cleavage generates 2 forms; T1-TrpRS and T2-TrpRS.

The protein localises to the cytoplasm. It catalyses the reaction tRNA(Trp) + L-tryptophan + ATP = L-tryptophyl-tRNA(Trp) + AMP + diphosphate + H(+). In terms of biological role, catalyzes the attachment of tryptophan to tRNA(Trp) in a two-step reaction: tryptophan is first activated by ATP to form Trp-AMP and then transferred to the acceptor end of the tRNA(Trp). Could also possess an angiostatic activity. This is Tryptophan--tRNA ligase, cytoplasmic from Rattus norvegicus (Rat).